We begin with the raw amino-acid sequence, 99 residues long: Gibberellin-regulated protein 2 (99 aa).

Positions Met-1–Ala-26 are cleaved as a signal peptide.

Belongs to the GASA family. Six disulfide bonds may be present. As to expression, dry seeds and maturating siliques.

Its subcellular location is the secreted. Gibberellin-regulated protein that may function in hormonal controlled steps of development such as seed germination, flowering and seed maturation. This chain is Gibberellin-regulated protein 2 (GASA2), found in Arabidopsis thaliana (Mouse-ear cress).